The following is a 406-amino-acid chain: Interactor protein for cytohesin exchange factors 1 (406 aa).

The PH domain occupies 13 to 112 (HADCQGWLYK…WLNKLGFAVT (100 aa)). 3 disordered regions span residues 120 to 173 (DEEC…FSSL), 253 to 285 (SLNN…EDDE), and 383 to 406 (PQDP…ENSL). Positions 123 to 134 (CYSESEQEDPEV) are enriched in acidic residues. A compositionally biased stretch (low complexity) spans 144-153 (ASTTSSPVAA). Residue arginine 164 is modified to Phosphoserine. A compositionally biased stretch (basic and acidic residues) spans 272-285 (MADREEIKSSEDDE). Residues 392 to 406 (EVMNPTSSDCVENSL) are compositionally biased toward polar residues.

As to quaternary structure, interacts with guanine-nucleotide exchange factors PSCD1, PSCD2, PSCD3 and PSCD4.

The protein resides in the cytoplasm. It is found in the cell membrane. Enhances the promotion of guanine-nucleotide exchange by PSCD2 on ARF6 in a concentration-dependent manner. The sequence is that of Interactor protein for cytohesin exchange factors 1 (Ipcef1) from Mus musculus (Mouse).